Consider the following 38-residue polypeptide: Very early lactation protein (38 aa).

In terms of assembly, homodimer. Post-translationally, O-glycosylated. Contains sialic acid residues. In terms of tissue distribution, found in the whey fraction of milk (at protein level).

It is found in the secreted. The polypeptide is Very early lactation protein (Trichosurus vulpecula (Brush-tailed possum)).